Consider the following 186-residue polypeptide: Der GTPase-activating protein YihI (186 aa).

The segment at 1 to 65 is disordered; sequence MARTKKTRRI…AGSRHSAVDT (65 aa). 2 stretches are compositionally biased toward basic and acidic residues: residues 9 to 25 and 34 to 45; these read RITDIMPMRKTDKRPEN and TRYELDAKSREE.

The protein belongs to the YihI family. In terms of assembly, interacts with Der.

In terms of biological role, a GTPase-activating protein (GAP) that modifies Der/EngA GTPase function. May play a role in ribosome biogenesis. This Histophilus somni (strain 129Pt) (Haemophilus somnus) protein is Der GTPase-activating protein YihI.